The sequence spans 197 residues: Histocompatibility antigen 60c (197 aa).

Positions methionine 1–alanine 17 are cleaved as a signal peptide. Asparagine 51, asparagine 81, and asparagine 114 each carry an N-linked (GlcNAc...) asparagine glycan. A lipid anchor (GPI-anchor amidated serine) is attached at serine 177. The propeptide at methionine 178 to leucine 197 is removed in mature form.

It belongs to the NKG2D ligand family. As to expression, expressed in skin, and weakly in large intestine.

It is found in the cell membrane. In terms of biological role, ligand for the KLRK1 immunosurveillance receptor. Binding to KLRK1 stimulates cell lysis in vitro. This Mus musculus (Mouse) protein is Histocompatibility antigen 60c.